We begin with the raw amino-acid sequence, 500 residues long: Probable malate:quinone oxidoreductase (500 aa).

The protein belongs to the MQO family. Requires FAD as cofactor.

The catalysed reaction is (S)-malate + a quinone = a quinol + oxaloacetate. It participates in carbohydrate metabolism; tricarboxylic acid cycle; oxaloacetate from (S)-malate (quinone route): step 1/1. This Bacillus cereus (strain ATCC 10987 / NRS 248) protein is Probable malate:quinone oxidoreductase.